We begin with the raw amino-acid sequence, 666 residues long: E3 ubiquitin-protein ligase MBR2 (666 aa).

4 stretches are compositionally biased toward polar residues: residues 1-14, 23-35, 42-58, and 73-88; these read MQGP…STGI, CSTN…NNIL, FPNN…ASSS, and SSSR…SNGS. Disordered regions lie at residues 1–58, 73–95, 155–179, 221–329, 400–433, and 457–491; these read MQGP…ASSS, SSSR…RQLL, SLGS…GLGS, SSLS…DGQP, NPST…TPHN, and GASL…RQRR. Residues 221-239 are compositionally biased toward low complexity; sequence SSLSLSMPSQNSPNVNNQS. Composition is skewed to polar residues over residues 258 to 268, 286 to 303, and 414 to 433; these read AFPSTRSTETI, FSFT…QLPA, and GSSS…TPHN. An RING-type; atypical zinc finger spans residues 619-660; that stretch reads CCVCQEEYAEGDDLGTLGCGHEFHTACVKQWLMLKNLCPICK.

It belongs to the RING-type zinc finger family. As to quaternary structure, interacts with MED25 and UBC11.

The enzyme catalyses S-ubiquitinyl-[E2 ubiquitin-conjugating enzyme]-L-cysteine + [acceptor protein]-L-lysine = [E2 ubiquitin-conjugating enzyme]-L-cysteine + N(6)-ubiquitinyl-[acceptor protein]-L-lysine.. It participates in protein modification; protein ubiquitination. E3 ubiquitin-protein ligase that functions as a regulator of MED25 stability by targeting MED25 for degradation in a RING-H2-dependent way. Proteasome-dependent degradation of MED25 seems to activate its function as positive regulator of FLOWERING LOCUS T (FT) and is important to induce the expression of FT and consequently to promote flowering. May function downstream of HAL3 and be required for HAL3-regulated plant growth. Activation of MBR2 by HAL3 may lead to the degradation of cell cycle suppressors, resulting in enhancement of cell division and plant growth. The chain is E3 ubiquitin-protein ligase MBR2 (MBR2) from Arabidopsis thaliana (Mouse-ear cress).